We begin with the raw amino-acid sequence, 380 residues long: uncharacterized protein (380 aa).

The first 18 residues, 1–18 (MALRHLALLAGLLVGVAS), serve as a signal peptide directing secretion. N104, N111, and N128 each carry an N-linked (GlcNAc...) asparagine glycan. The chain crosses the membrane as a helical span at residues 148–168 (LFLGTFFISSGLILSVAGFFY). 2 disordered regions span residues 229-256 (PQTG…QGQG) and 336-380 (RFSG…ISNV). The span at 240-249 (PPLPGSPGDP) shows a compositional bias: pro residues. Residues 356-366 (VRRERPLDRAT) are compositionally biased toward basic and acidic residues.

The protein resides in the membrane. This is an uncharacterized protein from Homo sapiens (Human).